The chain runs to 294 residues: Casein kinase II subunit beta (294 aa).

Disordered stretches follow at residues 66-90 (DHNT…SKRN) and 269-294 (KRME…MASE). Over residues 70–87 (DNTTTNTSNNNDSRNGTS) the composition is skewed to low complexity. Residues 273–288 (EDDEEEEDEVEEEDDD) are compositionally biased toward acidic residues.

The protein belongs to the casein kinase 2 subunit beta family. Tetramer composed of two alpha chains, one beta chain and one beta' chain. In terms of processing, phosphorylated by alpha subunit.

Functionally, regulatory subunit of casein kinase II/CK2. As part of the kinase complex regulates the basal catalytic activity of the alpha subunit a constitutively active serine/threonine-protein kinase that phosphorylates a large number of substrates containing acidic residues C-terminal to the phosphorylated serine or threonine. This Candida albicans (Yeast) protein is Casein kinase II subunit beta (CKB1).